The primary structure comprises 276 residues: Undecaprenyl-diphosphatase (276 aa).

The next 7 membrane-spanning stretches (helical) occupy residues 48–68 (AANS…AIVF), 92–112 (LSIA…FLFE), 119–139 (LFSV…MLFA), 155–175 (ISYK…WPGF), 196–216 (ADFT…LSLV), 225–245 (DLMP…LFVV), and 255–275 (IKLV…LLIM).

It belongs to the UppP family.

The protein resides in the cell membrane. It carries out the reaction di-trans,octa-cis-undecaprenyl diphosphate + H2O = di-trans,octa-cis-undecaprenyl phosphate + phosphate + H(+). Its function is as follows. Catalyzes the dephosphorylation of undecaprenyl diphosphate (UPP). Confers resistance to bacitracin. In Bacillus subtilis (strain 168), this protein is Undecaprenyl-diphosphatase.